The chain runs to 498 residues: Polyamine aminopropyltransferase (498 aa).

A run of 6 helical transmembrane segments spans residues 7–27 (ISVL…GTIA), 35–55 (VTQF…GSWL), 67–87 (FLEI…ILYL), 97–117 (IPLF…IPVL), 134–154 (VLSL…IFFA), and 163–183 (GFIF…VLPL). Residues 196–446 (VVVLTLLILG…AGQRPIQFKK (251 aa)) form a spermidine synthase region. The PABS domain maps to 200–439 (TLLILGFSYS…GEWGFVLAGQ (240 aa)). Gln234 contacts S-methyl-5'-thioadenosine. Spermidine-binding residues include His264 and Asp288. S-methyl-5'-thioadenosine is bound by residues Asp308 and 342-343 (DA). Residue Asp360 is the Proton acceptor of the active site.

This sequence belongs to the spermidine/spermine synthase family. Homodimer or homotetramer.

Its subcellular location is the cell membrane. The enzyme catalyses S-adenosyl 3-(methylsulfanyl)propylamine + putrescine = S-methyl-5'-thioadenosine + spermidine + H(+). It functions in the pathway amine and polyamine biosynthesis; spermidine biosynthesis; spermidine from putrescine: step 1/1. Catalyzes the irreversible transfer of a propylamine group from the amino donor S-adenosylmethioninamine (decarboxy-AdoMet) to putrescine (1,4-diaminobutane) to yield spermidine. The chain is Polyamine aminopropyltransferase from Leptospira interrogans serogroup Icterohaemorrhagiae serovar copenhageni (strain Fiocruz L1-130).